The sequence spans 283 residues: uncharacterized protein (283 aa).

An N-terminal signal peptide occupies residues 1–23; sequence MFAFASFAISAIFFLCSFSYVSS.

It localises to the secreted. This is an uncharacterized protein from Schizosaccharomyces pombe (strain 972 / ATCC 24843) (Fission yeast).